The primary structure comprises 256 residues: uncharacterized protein (256 aa).

The signal sequence occupies residues 1 to 22; that stretch reads MGYLKRIGMCISLLIVIIFVTS. The N-palmitoyl cysteine moiety is linked to residue C23. Residue C23 is the site of S-diacylglycerol cysteine attachment.

This sequence belongs to the staphylococcal tandem lipoprotein family.

It is found in the cell membrane. This is an uncharacterized protein from Staphylococcus aureus (strain MSSA476).